The sequence spans 341 residues: Methionine import ATP-binding protein MetN 3 (341 aa).

The ABC transporter domain maps to 2–241; it reads ILLENVKKIY…PQQDITKRFV (240 aa). 38 to 45 lines the ATP pocket; it reads GYSGAGKS.

The protein belongs to the ABC transporter superfamily. Methionine importer (TC 3.A.1.24) family. As to quaternary structure, the complex is composed of two ATP-binding proteins (MetN), two transmembrane proteins (MetI) and a solute-binding protein (MetQ).

The protein resides in the cell membrane. It carries out the reaction L-methionine(out) + ATP + H2O = L-methionine(in) + ADP + phosphate + H(+). The catalysed reaction is D-methionine(out) + ATP + H2O = D-methionine(in) + ADP + phosphate + H(+). Its function is as follows. Part of the ABC transporter complex MetNIQ involved in methionine import. Responsible for energy coupling to the transport system. This Bacillus anthracis protein is Methionine import ATP-binding protein MetN 3.